We begin with the raw amino-acid sequence, 481 residues long: Aromatic amino acid aminotransferase DDB_G0272014 (481 aa).

At lysine 300 the chain carries N6-(pyridoxal phosphate)lysine.

This sequence belongs to the class-I pyridoxal-phosphate-dependent aminotransferase family. It depends on pyridoxal 5'-phosphate as a cofactor.

The protein resides in the cytoplasm. The catalysed reaction is an aromatic L-alpha-amino acid + 2-oxoglutarate = an aromatic oxo-acid + L-glutamate. Its function is as follows. Has aromatic amino acid transaminase activity. This Dictyostelium discoideum (Social amoeba) protein is Aromatic amino acid aminotransferase DDB_G0272014.